Consider the following 70-residue polypeptide: SPbeta prophage-derived uncharacterized protein YorZ (70 aa).

The polypeptide is SPbeta prophage-derived uncharacterized protein YorZ (yorZ) (Bacillus subtilis (strain 168)).